The chain runs to 143 residues: MIINVFYKTKVPSHFRKTSLFKAGVSAALGKFASKKGEVNLIFVDGKEIHKINKEFLNHDYKTDVISFNYPFPQKGGEGLPFGDIFVCYDVAKENASLYGQGVLKEMLTYAVHGALHLAGMDDATPKERSAMDDETGRIILKI.

Positions 113, 117, and 123 each coordinate Zn(2+).

The protein belongs to the endoribonuclease YbeY family. Zn(2+) serves as cofactor.

The protein localises to the cytoplasm. Single strand-specific metallo-endoribonuclease involved in late-stage 70S ribosome quality control and in maturation of the 3' terminus of the 16S rRNA. In Elusimicrobium minutum (strain Pei191), this protein is Endoribonuclease YbeY.